Reading from the N-terminus, the 124-residue chain is MPTIQQLVRKGRQAKASKTKTPALKGSPQRRGVCTRVYTTTPKKPNSALRKVARVRLTSGVEVTAYIPGVGHNLQEHSIVLVRGGRVKDLPGVRYKIIRGSLDTQGVRNRKQGRSRYGAKKEKS.

The interval 1-32 is disordered; that stretch reads MPTIQQLVRKGRQAKASKTKTPALKGSPQRRG. The span at 9 to 18 shows a compositional bias: basic residues; the sequence is RKGRQAKASK. The residue at position 89 (Asp-89) is a 3-methylthioaspartic acid.

It belongs to the universal ribosomal protein uS12 family. As to quaternary structure, part of the 30S ribosomal subunit. Contacts proteins S8 and S17. May interact with IF1 in the 30S initiation complex.

With S4 and S5 plays an important role in translational accuracy. Functionally, interacts with and stabilizes bases of the 16S rRNA that are involved in tRNA selection in the A site and with the mRNA backbone. Located at the interface of the 30S and 50S subunits, it traverses the body of the 30S subunit contacting proteins on the other side and probably holding the rRNA structure together. The combined cluster of proteins S8, S12 and S17 appears to hold together the shoulder and platform of the 30S subunit. The polypeptide is Small ribosomal subunit protein uS12 (Acidothermus cellulolyticus (strain ATCC 43068 / DSM 8971 / 11B)).